The chain runs to 692 residues: Mitogen-activated protein kinase kinase kinase 7-interacting protein 3 homolog (692 aa).

A CUE domain is found at 8 to 51; it reads LDIQVLNDLQQRFPEIPRDVVSQCMLQNNSNLDACYRALTQESC. Disordered stretches follow at residues 138-159, 206-333, and 349-427; these read NDQN…GVGT, YGTP…PYGP, and SQQR…VVMS. 3 stretches are compositionally biased toward polar residues: residues 215–230, 249–298, and 349–387; these read PSQN…NTAW, QSFQ…QTSH, and SQQR…SGSP. A compositionally biased stretch (low complexity) spans 409–422; sequence SQPPTTTGSPTPSS. A coiled-coil region spans residues 496 to 580; that stretch reads ALLLHQRARM…QKEIDLLQSR (85 aa). The disordered stretch occupies residues 598–662; the sequence is SPGPAVPPNT…SPRPGRDEDF (65 aa). Over residues 608–620 the composition is skewed to basic and acidic residues; that stretch reads CKKESSETTSGER. Residues 662–692 form a RanBP2-type zinc finger; that stretch reads FEGSPWNCNSCTFLNHPALNRCEQCEMPRFT.

Functionally, may play a role in signaling pathway. This chain is Mitogen-activated protein kinase kinase kinase 7-interacting protein 3 homolog (map3k7ip3), found in Xenopus laevis (African clawed frog).